A 465-amino-acid chain; its full sequence is Glutamate--tRNA ligase (465 aa).

A 'HIGH' region motif is present at residues 11–21 (PSPTGFIHLGN). Positions 118-139 (GEKPRYDGTWRPAPGKILPPPP) are disordered. The 'KMSKS' region motif lies at 243–247 (KMSKR). Lysine 246 provides a ligand contact to ATP.

This sequence belongs to the class-I aminoacyl-tRNA synthetase family. Glutamate--tRNA ligase type 1 subfamily. Monomer.

The protein localises to the cytoplasm. The catalysed reaction is tRNA(Glu) + L-glutamate + ATP = L-glutamyl-tRNA(Glu) + AMP + diphosphate. In terms of biological role, catalyzes the attachment of glutamate to tRNA(Glu) in a two-step reaction: glutamate is first activated by ATP to form Glu-AMP and then transferred to the acceptor end of tRNA(Glu). This chain is Glutamate--tRNA ligase, found in Ralstonia pickettii (strain 12J).